Consider the following 383-residue polypeptide: MRWNKKSLFAVLNNHLIDYPTPINLNYFFGFGSLAGIMLVVQILTGIFLAMHYTPHIDLAFNSVEHIMRDVNNGWLMRYTHANGASFFFIVVYVHIFRGLYYGSYITPREALWCSGVIIFILMMATAFMGYVLPWGQMSFWGATVITNLFSAIPLIGKDIVDWLWGGFAVDNPTLNRFFSLHFTFPFVIVGAVLIHLILLHEVGSNNPLGITLKTENIPFYPYFYTKDLFGLMVLFLVFFIFIFYYPNTLGHPDNYIEANPMKTPLHIVPEWYFLPFYAILRSIPNKIGGVIAMFGSLIVLLTIPFTNSSEIRSTAFRPIFKVCYWLLVVAFLLLGWVGQCPVEYPYTEIGIISMIYYFFFFIIIIPFLGKFETYLVRYNTNK.

Transmembrane regions (helical) follow at residues 31-51, 75-97, 112-132, and 178-198; these read FGSLAGIMLVVQILTGIFLAM, WLMRYTHANGASFFFIVVYVHIF, LWCSGVIIFILMMATAFMGYV, and FFSLHFTFPFVIVGAVLIHLI. His-81 and His-95 together coordinate heme b. Heme b contacts are provided by His-182 and His-196. His-201 serves as a coordination point for a ubiquinone. 4 helical membrane-spanning segments follow: residues 224–244, 288–308, 320–340, and 347–367; these read FYTKDLFGLMVLFLVFFIFIF, IGGVIAMFGSLIVLLTIPFTN, IFKVCYWLLVVAFLLLGWVGQ, and YTEIGIISMIYYFFFFIIIIP.

The protein belongs to the cytochrome b family. In terms of assembly, fungal cytochrome b-c1 complex contains 10 subunits; 3 respiratory subunits, 2 core proteins and 5 low-molecular weight proteins. Cytochrome b-c1 complex is a homodimer. It depends on heme b as a cofactor.

Its subcellular location is the mitochondrion inner membrane. In terms of biological role, component of the ubiquinol-cytochrome c reductase complex (complex III or cytochrome b-c1 complex) that is part of the mitochondrial respiratory chain. The b-c1 complex mediates electron transfer from ubiquinol to cytochrome c. Contributes to the generation of a proton gradient across the mitochondrial membrane that is then used for ATP synthesis. In Phytophthora megasperma (Potato pink rot fungus), this protein is Cytochrome b (cob).